The primary structure comprises 404 residues: MSVTLDLSRVSSDAAPATPVTKPLINLSGLTRPQLVAALVESGVVEHGKAKMRATQIFRWMHHRGVTDFADMSDVAKETRARLAEAFTIARPEIVERQVSKDGTRKWLIRMAPGIEVESVYIPGVGRAGALCVSSQVGCTLNCSFCHTGTQPLVRNLTAAEIVAQVQVAKDDLAEWPSDKEDRQLSNIVFMGMGEPLYNLGQVADAIEIISDNEGIAISRRRITVSTSGVVPMLEKLGSTTQAMLAISLHATNDPLRDVLVPLNKKYPIAELMAGIRAYPGLSNARRVTFEYVMLKGVNDSPEEARALVKLIKGIPAKINLIPFNPWPGSDYQCSDWATIEAFAAILNKAGYSSPIRTPRGRDILAACGQLKSESEKVRASALRKLSLAAMAGVLSDDDEDETA.

Glutamate 118 acts as the Proton acceptor in catalysis. Residues 125–357 enclose the Radical SAM core domain; sequence VGRAGALCVS…NKAGYSSPIR (233 aa). Cysteine 132 and cysteine 368 are disulfide-bonded. [4Fe-4S] cluster-binding residues include cysteine 139, cysteine 143, and cysteine 146. Residues 194–195, serine 226, 248–250, and asparagine 325 each bind S-adenosyl-L-methionine; these read GE and SLH. Cysteine 368 serves as the catalytic S-methylcysteine intermediate.

It belongs to the radical SAM superfamily. RlmN family. The cofactor is [4Fe-4S] cluster.

Its subcellular location is the cytoplasm. It catalyses the reaction adenosine(2503) in 23S rRNA + 2 reduced [2Fe-2S]-[ferredoxin] + 2 S-adenosyl-L-methionine = 2-methyladenosine(2503) in 23S rRNA + 5'-deoxyadenosine + L-methionine + 2 oxidized [2Fe-2S]-[ferredoxin] + S-adenosyl-L-homocysteine. It carries out the reaction adenosine(37) in tRNA + 2 reduced [2Fe-2S]-[ferredoxin] + 2 S-adenosyl-L-methionine = 2-methyladenosine(37) in tRNA + 5'-deoxyadenosine + L-methionine + 2 oxidized [2Fe-2S]-[ferredoxin] + S-adenosyl-L-homocysteine. Functionally, specifically methylates position 2 of adenine 2503 in 23S rRNA and position 2 of adenine 37 in tRNAs. m2A2503 modification seems to play a crucial role in the proofreading step occurring at the peptidyl transferase center and thus would serve to optimize ribosomal fidelity. This is Dual-specificity RNA methyltransferase RlmN from Caulobacter vibrioides (strain ATCC 19089 / CIP 103742 / CB 15) (Caulobacter crescentus).